A 44-amino-acid chain; its full sequence is Cytochrome b559 subunit beta (44 aa).

A helical transmembrane segment spans residues 19-35 (WLSVHALGVPSVFFLGA). His-23 lines the heme pocket.

It belongs to the PsbE/PsbF family. Heterodimer of an alpha subunit and a beta subunit. PSII is composed of 1 copy each of membrane proteins PsbA, PsbB, PsbC, PsbD, PsbE, PsbF, PsbH, PsbI, PsbJ, PsbK, PsbL, PsbM, PsbT, PsbX, PsbY, PsbZ, Psb30/Ycf12, peripheral proteins PsbO, CyanoQ (PsbQ), PsbU, PsbV and a large number of cofactors. It forms dimeric complexes. The cofactor is heme b.

The protein localises to the cellular thylakoid membrane. Its function is as follows. This b-type cytochrome is tightly associated with the reaction center of photosystem II (PSII). PSII is a light-driven water:plastoquinone oxidoreductase that uses light energy to abstract electrons from H(2)O, generating O(2) and a proton gradient subsequently used for ATP formation. It consists of a core antenna complex that captures photons, and an electron transfer chain that converts photonic excitation into a charge separation. The chain is Cytochrome b559 subunit beta from Synechococcus elongatus (strain ATCC 33912 / PCC 7942 / FACHB-805) (Anacystis nidulans R2).